The following is a 735-amino-acid chain: Exocyst complex component 7 (735 aa).

2 coiled-coil regions span residues 5–42 (QEASARRREIEDKLKQEEETLSFIRDSLEKSDQLTKNM) and 63–85 (VHKQTENLQRLQENVEKTLSCLD). The residue at position 133 (Ser133) is a Phosphoserine. The interval 239-268 (HKSSSSSGVPYSPAIPNKRKDTPTKKPVKR) is disordered.

Belongs to the EXO70 family. The exocyst complex is composed of EXOC1, EXOC2, EXOC3, EXOC4, EXOC5, EXOC6, EXOC7 and EXOC8. Interacts with ARHQ in a GTP-dependent manner. Interacts with RAB11FIP3. Abundant in the ventricular zone, the outer subventricular zone and the cortical plate of the fetal cortex.

It is found in the cytoplasm. The protein resides in the cytosol. It localises to the cell membrane. Its subcellular location is the midbody. The protein localises to the midbody ring. Its function is as follows. Component of the exocyst complex involved in the docking of exocytic vesicles with fusion sites on the plasma membrane. In adipocytes, plays a crucial role in targeting SLC2A4 vesicle to the plasma membrane in response to insulin, perhaps directing the vesicle to the precise site of fusion. It is required for neuron survival and plays an essential role in cortical development. This Homo sapiens (Human) protein is Exocyst complex component 7 (EXOC7).